The sequence spans 433 residues: Glutamate-1-semialdehyde 2,1-aminomutase (433 aa).

K273 carries the post-translational modification N6-(pyridoxal phosphate)lysine.

The protein belongs to the class-III pyridoxal-phosphate-dependent aminotransferase family. HemL subfamily. Homodimer. The cofactor is pyridoxal 5'-phosphate.

The protein resides in the cytoplasm. It catalyses the reaction (S)-4-amino-5-oxopentanoate = 5-aminolevulinate. The protein operates within porphyrin-containing compound metabolism; protoporphyrin-IX biosynthesis; 5-aminolevulinate from L-glutamyl-tRNA(Glu): step 2/2. It functions in the pathway porphyrin-containing compound metabolism; chlorophyll biosynthesis. The protein is Glutamate-1-semialdehyde 2,1-aminomutase of Microcystis aeruginosa (strain NIES-843 / IAM M-2473).